Consider the following 313-residue polypeptide: Formimidoylglutamase (313 aa).

Residues histidine 130, aspartate 155, histidine 157, aspartate 159, aspartate 241, and aspartate 243 each contribute to the Mn(2+) site.

Belongs to the arginase family. Mn(2+) serves as cofactor.

The catalysed reaction is N-formimidoyl-L-glutamate + H2O = formamide + L-glutamate. Its pathway is amino-acid degradation; L-histidine degradation into L-glutamate; L-glutamate from N-formimidoyl-L-glutamate (hydrolase route): step 1/1. In terms of biological role, catalyzes the conversion of N-formimidoyl-L-glutamate to L-glutamate and formamide. The polypeptide is Formimidoylglutamase (Salmonella choleraesuis (strain SC-B67)).